A 407-amino-acid polypeptide reads, in one-letter code: Protein arginine N-methyltransferase 2 (407 aa).

The RMT2 domain occupies 186–407 (TAADQATYLK…YYYHPEIRFA (222 aa)). Residues Tyr-193, Met-223, 246–251 (FGMGII), 267–269 (EAH), 294–295 (WQ), and Asp-315 contribute to the S-adenosyl-L-methionine site.

Belongs to the class I-like SAM-binding methyltransferase superfamily. RMT2 methyltransferase family. Monomer.

The protein localises to the cytoplasm. It localises to the nucleus. Functionally, S-adenosyl-L-methionine-dependent protein-arginine N-methyltransferase that methylates the delta-nitrogen atom of arginine residues to form N5-methylarginine (type IV) in target proteins. Monomethylates ribosomal protein L12. The polypeptide is Protein arginine N-methyltransferase 2 (Kluyveromyces lactis (strain ATCC 8585 / CBS 2359 / DSM 70799 / NBRC 1267 / NRRL Y-1140 / WM37) (Yeast)).